The chain runs to 174 residues: 5-hydroxymethyl-dUMP N-hydrolase (174 aa).

Ala-2 is subject to N-acetylalanine. A 5-hydroxymethyl-dUMP-binding site is contributed by Gly-27. Position 28 is a phosphoserine (Ser-28). The 5-hydroxymethyl-dUMP site is built by Ile-29, Arg-30, Gly-31, Ser-98, Gly-100, and Glu-104. The residue at position 98 (Ser-98) is a Phosphoserine. 4 positions are modified to phosphoserine: Ser-123, Ser-128, Ser-138, and Ser-169. 5-hydroxymethyl-dUMP is bound at residue Ser-128.

It belongs to the 2'-deoxynucleoside 5'-phosphate N-hydrolase 1 family. In terms of assembly, monomer and homodimer. As to expression, expressed at low levels in brain, colon, lung, peripheral blood leukocytes, placenta, small intestine, and thymus. Expressed at high levels in heart, kidney, liver, skeletal muscle and spleen. Overexpressed in a significant proportion of breast cancers.

The protein resides in the cytoplasm. It is found in the nucleus. The enzyme catalyses 5-hydroxymethyl-dUMP + H2O = 5-hydroxymethyluracil + 2-deoxy-D-ribose 5-phosphate. Inhibited by AMP and GMP. Its function is as follows. Part of a nucleotide salvage pathway that eliminates epigenetically modified 5-hydroxymethyl-dCMP (hmdCMP) in a two-step process entailing deamination to cytotoxic 5-hydroxymethyl-dUMP (hmdUMP), followed by its hydrolysis into 5-hydroxymethyluracil (hmU) and 2-deoxy-D-ribose 5-phosphate (deoxyribosephosphate). Catalyzes the second step in that pathway, the hydrolysis of the N-glycosidic bond in hmdUMP, degrading this cytotoxic nucleotide to avoid its genomic integration. The chain is 5-hydroxymethyl-dUMP N-hydrolase from Homo sapiens (Human).